Here is a 508-residue protein sequence, read N- to C-terminus: Ribonuclease Y (508 aa).

In terms of domain architecture, KH spans 198-264; the sequence is TVSVINLPND…RLTIEKLITD (67 aa). In terms of domain architecture, HD spans 324–417; the sequence is VLTHSIEVAK…VQAADAVSAS (94 aa).

It belongs to the RNase Y family.

In terms of biological role, endoribonuclease that initiates mRNA decay. The sequence is that of Ribonuclease Y from Fusobacterium nucleatum subsp. nucleatum (strain ATCC 25586 / DSM 15643 / BCRC 10681 / CIP 101130 / JCM 8532 / KCTC 2640 / LMG 13131 / VPI 4355).